The primary structure comprises 144 residues: Large ribosomal subunit protein uL11 (144 aa).

This sequence belongs to the universal ribosomal protein uL11 family. Part of the ribosomal stalk of the 50S ribosomal subunit. Interacts with L10 and the large rRNA to form the base of the stalk. L10 forms an elongated spine to which L12 dimers bind in a sequential fashion forming a multimeric L10(L12)X complex. In terms of processing, one or more lysine residues are methylated.

Its function is as follows. Forms part of the ribosomal stalk which helps the ribosome interact with GTP-bound translation factors. The chain is Large ribosomal subunit protein uL11 from Streptomyces sp. (strain FRI-5).